Consider the following 2355-residue polypeptide: Acetyl-CoA carboxylase 2 (2355 aa).

The Biotin carboxylation domain occupies Pro-138–Ala-645. In terms of domain architecture, ATP-grasp spans Gly-291 to Ile-485. Cys-317–Leu-374 provides a ligand contact to ATP. Residues Glu-440, Glu-454, and Asn-456 each contribute to the Mg(2+) site. Positions 440, 454, and 456 each coordinate Mn(2+). Arg-458 is an active-site residue. In terms of domain architecture, Biotinyl-binding spans Leu-772–Asp-846. An N6-biotinyllysine modification is found at Lys-813. Residue Thr-1133 is modified to Phosphothreonine. Ser-1293 carries the post-translational modification Phosphoserine. The 340-residue stretch at Gln-1593–Ala-1932 folds into the CoA carboxyltransferase N-terminal domain. Residues Gln-1593–Lys-2251 form a carboxyltransferase region. Residues Arg-1841, Lys-2142, and Arg-2144 each contribute to the CoA site. The region spanning Pro-1936–Lys-2251 is the CoA carboxyltransferase C-terminal domain.

As to quaternary structure, homodimer. The cofactor is biotin. Mg(2+) is required as a cofactor. Requires Mn(2+) as cofactor. In terms of tissue distribution, widely expressed at low levels.

It is found in the cytoplasm. It localises to the cytosol. The enzyme catalyses hydrogencarbonate + acetyl-CoA + ATP = malonyl-CoA + ADP + phosphate + H(+). It carries out the reaction N(6)-biotinyl-L-lysyl-[protein] + hydrogencarbonate + ATP = N(6)-carboxybiotinyl-L-lysyl-[protein] + ADP + phosphate + H(+). Its pathway is lipid metabolism; malonyl-CoA biosynthesis; malonyl-CoA from acetyl-CoA: step 1/1. Multifunctional enzyme that catalyzes the carboxylation of acetyl-CoA, forming malonyl-CoA, which is used in the plastid for fatty acid synthesis and in the cytosol in various biosynthetic pathways including fatty acid elongation. The polypeptide is Acetyl-CoA carboxylase 2 (ACC2) (Arabidopsis thaliana (Mouse-ear cress)).